Reading from the N-terminus, the 524-residue chain is 3-epi-6-deoxocathasterone 23-monooxygenase CYP90C1 (524 aa).

A helical transmembrane segment spans residues 25-45 (YLVAGFLVLTAGILLRPWLWL). Cysteine 463 provides a ligand contact to heme.

It belongs to the cytochrome P450 family. Heme is required as a cofactor. Widely expressed.

The protein resides in the endoplasmic reticulum membrane. The enzyme catalyses 3-epi-6-deoxocathasterone + reduced [NADPH--hemoprotein reductase] + O2 = 6-deoxotyphasterol + oxidized [NADPH--hemoprotein reductase] + H2O + H(+). It carries out the reaction (22S,24R)-22-hydroxy-5alpha-ergostan-3-one + reduced [NADPH--hemoprotein reductase] + O2 = 3-dehydro-6-deoxoteasterone + oxidized [NADPH--hemoprotein reductase] + H2O + H(+). The protein operates within plant hormone biosynthesis; brassinosteroid biosynthesis. Involved in brassinosteroid (BR) biosynthesis. Converts typhasterol (TY) to cathasterone (CS) and 6-deoxotyphasterol (6-deoxoTY) to 6-deoxocathasterone (6-deoxoCT). C-23 hydroxylase that converts directly (22S,24R)-22-hydroxy-5-alpha-ergostan-3-one and 3-epi-6-deoxocathasterone to 3-dehydro-6-deoxoteasterone (6-deoxo3DT, 6-deoxo3DHT) and 6-deoxotyphasterol (6-deoxoTY), respectively. These C-23 hydroxylation shortcuts bypass campestanol, 6-deoxocathasterone, and 6-deoxoteasterone (6-deoxoTE). Also catalyzes the conversion of cathasterone to teasterone (TE), (22S,24R)-22-hydroxyergost-4-en-3-one (22-OH-4-en-3-one) to (22R,23R)-22,23-dihydroxy-campest-4-en-3-one (22,23-diOH-4-en-3-one) and (22S)-22-hydroxycampesterol (22-OHCR) to (22R,23R)-22,23-dihydroxycampesterol (22,23-diOHCR). Required for the regulation of polar elongation of leaf cells. Required for the longitudinal elongation of floral organs. This Arabidopsis thaliana (Mouse-ear cress) protein is 3-epi-6-deoxocathasterone 23-monooxygenase CYP90C1.